The following is a 457-amino-acid chain: UDP-N-acetylmuramoylalanine--D-glutamate ligase (457 aa).

126–132 (GTAGKGS) is an ATP binding site.

The protein belongs to the MurCDEF family.

The protein localises to the cytoplasm. The catalysed reaction is UDP-N-acetyl-alpha-D-muramoyl-L-alanine + D-glutamate + ATP = UDP-N-acetyl-alpha-D-muramoyl-L-alanyl-D-glutamate + ADP + phosphate + H(+). The protein operates within cell wall biogenesis; peptidoglycan biosynthesis. Functionally, cell wall formation. Catalyzes the addition of glutamate to the nucleotide precursor UDP-N-acetylmuramoyl-L-alanine (UMA). This chain is UDP-N-acetylmuramoylalanine--D-glutamate ligase, found in Deinococcus radiodurans (strain ATCC 13939 / DSM 20539 / JCM 16871 / CCUG 27074 / LMG 4051 / NBRC 15346 / NCIMB 9279 / VKM B-1422 / R1).